The following is a 171-amino-acid chain: MAKGSANNVKVNQDAGKSQPEKKENKDFQYIVRIANKDLNGERLLPLALSDLKGIGERLGYVIAERLDLPIDKKIGELKEEQLEKLREYVEAKEYDLPEWLLNHRREPVTGKNLNLVSTDLEIQVQEDINLMKKIRSYKGIRHEKGKKVRGQRTRSNGRKGLSIGVVRKKE.

A compositionally biased stretch (polar residues) spans 1–11; sequence MAKGSANNVKV. 2 disordered regions span residues 1–24 and 144–164; these read MAKG…EKKE and EKGK…GLSI. Residues 144–158 are compositionally biased toward basic residues; that stretch reads EKGKKVRGQRTRSNG.

Belongs to the universal ribosomal protein uS13 family. As to quaternary structure, part of the 30S ribosomal subunit. Forms a loose heterodimer with protein S19. Forms two bridges to the 50S subunit in the 70S ribosome.

Its function is as follows. Located at the top of the head of the 30S subunit, it contacts several helices of the 16S rRNA. In the 70S ribosome it contacts the 23S rRNA (bridge B1a) and protein L5 of the 50S subunit (bridge B1b), connecting the 2 subunits; these bridges are implicated in subunit movement. The chain is Small ribosomal subunit protein uS13 from Thermoplasma acidophilum (strain ATCC 25905 / DSM 1728 / JCM 9062 / NBRC 15155 / AMRC-C165).